The sequence spans 124 residues: MTTVIHMMNGINSVAPTFKVNYFTNEHDVFKIGFSNDVVFEVNTRTYEVGTPEEFRLNAGQAAITVAFWDAFVQGGDDEKFFTTIESRLKSSVAYATWQLGIDFLPDIAWSKISPVELNLATLQ.

This is an uncharacterized protein from Magallana gigas (Pacific oyster).